The chain runs to 616 residues: Spastin (616 aa).

The segment at 1-43 is disordered; it reads MNSPGGRGKKKGSGGASNPVPPRPPPPCLAPAPPAAGPAPPPE. The interval 1–50 is required for nuclear localization; it reads MNSPGGRGKKKGSGGASNPVPPRPPPPCLAPAPPAAGPAPPPESPHKRNL. The Cytoplasmic segment spans residues 1–56; the sequence is MNSPGGRGKKKGSGGASNPVPPRPPPPCLAPAPPAAGPAPPPESPHKRNLYYFSYP. Residues 1–80 form a required for interaction with ATL1 region; that stretch reads MNSPGGRGKK…LGLLFVWLCQ (80 aa). The tract at residues 1-194 is required for midbody localization; sequence MNSPGGRGKK…LVMAKDRLQL (194 aa). A required for interaction with RTN1 region spans residues 1–300; it reads MNSPGGRGKK…GTPKTNRTNK (300 aa). Positions 4-11 match the Nuclear localization signal motif; that stretch reads PGGRGKKK. The segment covering 19–43 has biased composition (pro residues); it reads PVPPRPPPPCLAPAPPAAGPAPPPE. The required for interaction with SSNA1 and microtubules stretch occupies residues 50–87; the sequence is LYYFSYPLFVGFALLRLVAFHLGLLFVWLCQRFSRALM. Residues 57–77 constitute an intramembrane region (helical); it reads LFVGFALLRLVAFHLGLLFVW. Positions 59–67 match the Nuclear export signal motif; it reads VGFALLRLV. The Cytoplasmic segment spans residues 78-616; the sequence is LCQRFSRALM…WNKDFGDTTV (539 aa). The interval 112–196 is sufficient for interaction with CHMP1B; that stretch reads EAERVRVFHK…MAKDRLQLLE (85 aa). The segment at 114–200 is required for interaction with microtubules; it reads ERVRVFHKQA…RLQLLEKMQP (87 aa). Positions 120–195 constitute an MIT domain; it reads HKQAFEYISI…VMAKDRLQLL (76 aa). Residues 224 to 266 form a disordered region; sequence HLQSESGAVPKRKDPLTHTSNSLPRSKTVMKTGSAGLSGHHRA. A sufficient for microtubule severing region spans residues 228–616; it reads ESGAVPKRKD…WNKDFGDTTV (389 aa). Over residues 240 to 254 the composition is skewed to polar residues; sequence THTSNSLPRSKTVMK. 2 positions are modified to phosphoserine: serine 245 and serine 268. Residues 270–328 form a required for interaction with microtubules and microtubule severing region; sequence SGLSMVSGVKQGSGPAPTTHKGTPKTNRTNKPSTPTTATRKKKDLKNFRNVDSNLANLI. Residues 278 to 312 are disordered; the sequence is VKQGSGPAPTTHKGTPKTNRTNKPSTPTTATRKKK. A compositionally biased stretch (polar residues) spans 289-307; that stretch reads HKGTPKTNRTNKPSTPTTA. Position 306 is a phosphothreonine (threonine 306). A Nuclear localization signal motif is present at residues 309–312; it reads RKKK. Positions 310 to 312 are required for interaction with microtubules; it reads KKK. Residue 382 to 389 coordinates ATP; that stretch reads GPPGNGKT. At serine 597 the chain carries Phosphoserine.

This sequence belongs to the AAA ATPase family. Spastin subfamily. Homohexamer. Mostly monomeric, but assembles into hexameric structure for short periods of time. Oligomerization seems to be a prerequisite for catalytic activity. Binding to ATP in a cleft between two adjacent subunits stabilizes the homohexameric form. Binds to microtubules at least in part via the alpha-tubulin and beta-tubulin tails. The hexamer adopts a ring conformation through which microtubules pass prior to being severed. Does not interact strongly with tubulin heterodimers. Interacts (via MIT domain) with CHMP1B; the interaction is direct. Interacts with SSNA1. Interacts with ATL1. Interacts with RTN1. Interacts with ZFYVE27. Isoform 1 but not isoform 3 interacts with RTN2. Interacts with REEP1. Interacts (via MIT domain) with IST1. In terms of tissue distribution, expressed in brain, heart, kidney, liver, lung, pancreas, placenta and skeletal muscle. The short isoforms may predominate in brain and spinal cord.

It is found in the membrane. Its subcellular location is the endoplasmic reticulum. The protein resides in the midbody. It localises to the cytoplasm. The protein localises to the cytoskeleton. It is found in the microtubule organizing center. Its subcellular location is the centrosome. The protein resides in the perinuclear region. It localises to the nucleus. The protein localises to the spindle. It is found in the cell projection. Its subcellular location is the axon. The protein resides in the endoplasmic reticulum membrane. It localises to the nucleus membrane. The protein localises to the lipid droplet. It is found in the endosome. The catalysed reaction is n ATP + n H2O + a microtubule = n ADP + n phosphate + (n+1) alpha/beta tubulin heterodimers.. Its activity is regulated as follows. Allosteric enzyme with a cooperative mechanism; at least two neighbor subunits influence each other strongly in spastin hexamers. Microtubule binding promotes cooperative interactions among spastin subunits. ATP-bound enzyme interacts strongly and cooperatively with microtubules; this interaction stimulates ATP hydrolysis. Its function is as follows. ATP-dependent microtubule severing protein that specifically recognizes and cuts microtubules that are polyglutamylated. Preferentially recognizes and acts on microtubules decorated with short polyglutamate tails: severing activity increases as the number of glutamates per tubulin rises from one to eight, but decreases beyond this glutamylation threshold. Severing activity is not dependent on tubulin acetylation or detyrosination. Microtubule severing promotes reorganization of cellular microtubule arrays and the release of microtubules from the centrosome following nucleation. It is critical for the biogenesis and maintenance of complex microtubule arrays in axons, spindles and cilia. SPAST is involved in abscission step of cytokinesis and nuclear envelope reassembly during anaphase in cooperation with the ESCRT-III complex. Recruited at the midbody, probably by IST1, and participates in membrane fission during abscission together with the ESCRT-III complex. Recruited to the nuclear membrane by IST1 and mediates microtubule severing, promoting nuclear envelope sealing and mitotic spindle disassembly during late anaphase. Required for membrane traffic from the endoplasmic reticulum (ER) to the Golgi and endosome recycling. Recruited by IST1 to endosomes and regulates early endosomal tubulation and recycling by mediating microtubule severing. Probably plays a role in axon growth and the formation of axonal branches. Functionally, involved in lipid metabolism by regulating the size and distribution of lipid droplets. This Homo sapiens (Human) protein is Spastin.